The sequence spans 819 residues: Metabotropic glutamate receptor-like protein O (819 aa).

A signal peptide spans 1–19; it reads MKKVFFLILILNCVVGALS. Over 20-394 the chain is Extracellular; sequence NKNICKISLL…FVDSYSNSIK (375 aa). Asparagine 99, asparagine 185, asparagine 277, asparagine 295, asparagine 330, and asparagine 370 each carry an N-linked (GlcNAc...) asparagine glycan. Residues 395-415 traverse the membrane as a helical segment; sequence ISILSVSIFCIFICVLGMIFI. The Cytoplasmic segment spans residues 416 to 428; sequence TVLRNARILKSSS. The chain crosses the membrane as a helical span at residues 429-449; sequence PSFLLLILFGCIVIFTGCILF. The Extracellular portion of the chain corresponds to 450 to 457; that stretch reads SQPATDKT. Residues 458 to 478 traverse the membrane as a helical segment; sequence CQGRVWLLSIGYTIFLGSLLI. Topologically, residues 479–503 are cytoplasmic; sequence KNWRVWLLFDNKKLRKRSITNWKLY. A helical membrane pass occupies residues 504-524; that stretch reads PWVAGILVVDVLILALWQGLG. Residues 525–550 lie on the Extracellular side of the membrane; sequence DIKSESRIIGTSFYQYTNVCTNNDQG. A helical transmembrane segment spans residues 551-571; sequence SIALYILLAFHGLKLLGTCFI. Residues 572–587 are Cytoplasmic-facing; it reads SFKIKLVDIEEFNESK. Residues 588–608 traverse the membrane as a helical segment; it reads PITTSVFIILFCIFTIILLIA. The Extracellular segment spans residues 609 to 624; sequence PSSSSSSASSPQPIAS. Residues 625–645 traverse the membrane as a helical segment; the sequence is LETIICICSVTTTAISIGLLF. At 646-819 the chain is on the cytoplasmic side; sequence GDKIYFITTQ…NNENEIISDT (174 aa). Positions 674–819 are disordered; the sequence is KDCDDDDDDS…NNENEIISDT (146 aa). The segment covering 695-712 has biased composition (basic residues); sequence NKNKNKNRNQSEKKKRPN. The segment covering 726-739 has biased composition (polar residues); that stretch reads ESVVFNPPSNNDLT. Basic and acidic residues predominate over residues 748–768; that stretch reads GIKEGHGHDSENNDEYEHHED. Positions 769-798 are enriched in acidic residues; sequence EDHEYEGEGEDEDHEDEYEVENDIEQEQEQ. Residues 799-808 are compositionally biased toward low complexity; the sequence is ESSNISISTK.

In the N-terminal section; belongs to the BMP lipoprotein family. This sequence in the C-terminal section; belongs to the G-protein coupled receptor 3 family. GABA-B receptor subfamily.

It localises to the membrane. The chain is Metabotropic glutamate receptor-like protein O (grlO) from Dictyostelium discoideum (Social amoeba).